The following is a 136-amino-acid chain: Ribulose bisphosphate carboxylase small subunit, chloroplastic 1 (136 aa).

A chloroplast-targeting transit peptide spans 1–13 (NTDITSNGERVKC).

It belongs to the RuBisCO small chain family. Heterohexadecamer of 8 large and 8 small subunits.

It is found in the plastid. Its subcellular location is the chloroplast. Its function is as follows. RuBisCO catalyzes two reactions: the carboxylation of D-ribulose 1,5-bisphosphate, the primary event in carbon dioxide fixation, as well as the oxidative fragmentation of the pentose substrate. Both reactions occur simultaneously and in competition at the same active site. Although the small subunit is not catalytic it is essential for maximal activity. The chain is Ribulose bisphosphate carboxylase small subunit, chloroplastic 1 from Pisum sativum (Garden pea).